Consider the following 237-residue polypeptide: Phosphoribosylaminoimidazole-succinocarboxamide synthase (237 aa).

It belongs to the SAICAR synthetase family.

The catalysed reaction is 5-amino-1-(5-phospho-D-ribosyl)imidazole-4-carboxylate + L-aspartate + ATP = (2S)-2-[5-amino-1-(5-phospho-beta-D-ribosyl)imidazole-4-carboxamido]succinate + ADP + phosphate + 2 H(+). It participates in purine metabolism; IMP biosynthesis via de novo pathway; 5-amino-1-(5-phospho-D-ribosyl)imidazole-4-carboxamide from 5-amino-1-(5-phospho-D-ribosyl)imidazole-4-carboxylate: step 1/2. This is Phosphoribosylaminoimidazole-succinocarboxamide synthase from Salmonella arizonae (strain ATCC BAA-731 / CDC346-86 / RSK2980).